The chain runs to 1220 residues: Polycomb protein Sfmbt (1220 aa).

Residues 322–357 form an FCS-type zinc finger; that stretch reads PIQKDGMAVCKRCGAIGVKHTFYTKSRRFCSMACAR. Zn(2+) is bound by residues Cys-331, Cys-334, Cys-351, and Cys-355. 2 disordered regions span residues 371-399 and 464-483; these read GDQA…QSQS and DATA…SYLS. The segment covering 473 to 482 has biased composition (polar residues); it reads EGASTPNSYL. MBT repeat units follow at residues 536–647, 655–753, 761–871, and 879–975; these read YDWL…LIPP, KDWK…LAAP, LAGR…VTPP, and FTWE…LEGP. Disordered regions lie at residues 976-1024 and 1050-1092; these read PRVA…IALK and NNQP…AGSG. The span at 991-1000 shows a compositional bias: basic residues; that stretch reads KIQRKRKPKK. Over residues 1052–1068 the composition is skewed to acidic residues; sequence QPEEEGDEEDPDADGDG. Residues 1071 to 1082 are compositionally biased toward polar residues; the sequence is STSHISEQSTTQ. The span at 1083–1092 shows a compositional bias: low complexity; it reads SSSDLIAGSG. One can recognise an SAM domain in the interval 1140 to 1203; the sequence is WNVYDVSQFL…SDLIAQLKCK (64 aa).

Interacts with pho as a component of the pho-repressive complex (PhoRC).

It is found in the nucleus. Its function is as follows. Polycomb group (PcG) protein that binds to the Polycomb response elements (PREs) found in the regulatory regions of many genes. PcG proteins act by forming multiprotein complexes, which are required to maintain the transcriptionally repressive state of homeotic genes throughout development. PcG proteins are not required to initiate repression, but to maintain it during later stages of development. They probably act via the methylation of histones, rendering chromatin heritably changed in its expressibility. Necessary but not sufficient to recruit a functional PcG repressive complex that represses target genes, suggesting that the recruitment of the distinct PRC1 complex is also required to allow a subsequent repression. This is Polycomb protein Sfmbt from Drosophila melanogaster (Fruit fly).